The following is a 229-amino-acid chain: Enolase-phosphatase E1 (229 aa).

It belongs to the HAD-like hydrolase superfamily. MasA/MtnC family. Monomer. Mg(2+) is required as a cofactor.

It carries out the reaction 5-methylsulfanyl-2,3-dioxopentyl phosphate + H2O = 1,2-dihydroxy-5-(methylsulfanyl)pent-1-en-3-one + phosphate. It functions in the pathway amino-acid biosynthesis; L-methionine biosynthesis via salvage pathway; L-methionine from S-methyl-5-thio-alpha-D-ribose 1-phosphate: step 3/6. It participates in amino-acid biosynthesis; L-methionine biosynthesis via salvage pathway; L-methionine from S-methyl-5-thio-alpha-D-ribose 1-phosphate: step 4/6. Bifunctional enzyme that catalyzes the enolization of 2,3-diketo-5-methylthiopentyl-1-phosphate (DK-MTP-1-P) into the intermediate 2-hydroxy-3-keto-5-methylthiopentenyl-1-phosphate (HK-MTPenyl-1-P), which is then dephosphorylated to form the acireductone 1,2-dihydroxy-3-keto-5-methylthiopentene (DHK-MTPene). The chain is Enolase-phosphatase E1 from Yersinia pseudotuberculosis serotype IB (strain PB1/+).